Consider the following 599-residue polypeptide: Adenine deaminase (599 aa).

This sequence belongs to the metallo-dependent hydrolases superfamily. Adenine deaminase family. The cofactor is Mn(2+).

The catalysed reaction is adenine + H2O + H(+) = hypoxanthine + NH4(+). In Clostridium botulinum (strain ATCC 19397 / Type A), this protein is Adenine deaminase.